A 513-amino-acid polypeptide reads, in one-letter code: GMP synthase [glutamine-hydrolyzing] (513 aa).

The region spanning 3–192 (TVVVLDYGSQ…VSKVAKMEKN (190 aa)) is the Glutamine amidotransferase type-1 domain. Catalysis depends on Cys80, which acts as the Nucleophile. Active-site residues include His166 and Glu168. A GMPS ATP-PPase domain is found at 193–388 (WKMTDFIEEK…LGLPDEMINR (196 aa)). 220 to 226 (SGGVDSS) is an ATP binding site.

As to quaternary structure, homodimer.

It catalyses the reaction XMP + L-glutamine + ATP + H2O = GMP + L-glutamate + AMP + diphosphate + 2 H(+). It functions in the pathway purine metabolism; GMP biosynthesis; GMP from XMP (L-Gln route): step 1/1. Catalyzes the synthesis of GMP from XMP. The protein is GMP synthase [glutamine-hydrolyzing] of Thermosipho africanus (strain TCF52B).